The primary structure comprises 585 residues: ATP-dependent lipid A-core flippase (585 aa).

The next 6 helical transmembrane spans lie at 18-38 (LWPT…ALVL), 68-88 (LMAV…FISS), 142-162 (SNAL…LAVM), 163-183 (IATS…IAVL), 255-275 (PIVQ…ATIP), and 277-297 (IMSQ…MLAM). The region spanning 30–313 (IAAAAALVLN…LTNVNSQFQR (284 aa)) is the ABC transmembrane type-1 domain. Residues 345–581 (VSFKDVSFTY…NGAYKQLHKM (237 aa)) form the ABC transporter domain. Position 379-386 (379-386 (GRSGSGKS)) interacts with ATP.

Belongs to the ABC transporter superfamily. Lipid exporter (TC 3.A.1.106) family. As to quaternary structure, homodimer.

Its subcellular location is the cell inner membrane. The catalysed reaction is ATP + H2O + lipid A-core oligosaccharideSide 1 = ADP + phosphate + lipid A-core oligosaccharideSide 2.. Functionally, involved in lipopolysaccharide (LPS) biosynthesis. Translocates lipid A-core from the inner to the outer leaflet of the inner membrane. Transmembrane domains (TMD) form a pore in the inner membrane and the ATP-binding domain (NBD) is responsible for energy generation. The protein is ATP-dependent lipid A-core flippase of Mannheimia succiniciproducens (strain KCTC 0769BP / MBEL55E).